A 617-amino-acid chain; its full sequence is Proline--tRNA ligase (617 aa).

Belongs to the class-II aminoacyl-tRNA synthetase family. ProS type 1 subfamily. As to quaternary structure, homodimer.

Its subcellular location is the cytoplasm. The catalysed reaction is tRNA(Pro) + L-proline + ATP = L-prolyl-tRNA(Pro) + AMP + diphosphate. In terms of biological role, catalyzes the attachment of proline to tRNA(Pro) in a two-step reaction: proline is first activated by ATP to form Pro-AMP and then transferred to the acceptor end of tRNA(Pro). As ProRS can inadvertently accommodate and process non-cognate amino acids such as alanine and cysteine, to avoid such errors it has two additional distinct editing activities against alanine. One activity is designated as 'pretransfer' editing and involves the tRNA(Pro)-independent hydrolysis of activated Ala-AMP. The other activity is designated 'posttransfer' editing and involves deacylation of mischarged Ala-tRNA(Pro). The misacylated Cys-tRNA(Pro) is not edited by ProRS. The chain is Proline--tRNA ligase from Streptococcus pneumoniae (strain 70585).